We begin with the raw amino-acid sequence, 304 residues long: Light-independent protochlorophyllide reductase iron-sulfur ATP-binding protein (304 aa).

ATP contacts are provided by residues 46–51 (GIGKST) and Lys75. Position 50 (Ser50) interacts with Mg(2+). 2 residues coordinate [4Fe-4S] cluster: Cys131 and Cys165. ATP is bound by residues 216 to 217 (NR) and 240 to 242 (PDL).

It belongs to the NifH/BchL/ChlL family. In terms of assembly, homodimer. Protochlorophyllide reductase is composed of three subunits; BchL, BchN and BchB. The cofactor is [4Fe-4S] cluster.

It catalyses the reaction chlorophyllide a + oxidized 2[4Fe-4S]-[ferredoxin] + 2 ADP + 2 phosphate = protochlorophyllide a + reduced 2[4Fe-4S]-[ferredoxin] + 2 ATP + 2 H2O. It functions in the pathway porphyrin-containing compound metabolism; bacteriochlorophyll biosynthesis (light-independent). Component of the dark-operative protochlorophyllide reductase (DPOR) that uses Mg-ATP and reduced ferredoxin to reduce ring D of protochlorophyllide (Pchlide) to form chlorophyllide a (Chlide). This reaction is light-independent. The L component serves as a unique electron donor to the NB-component of the complex, and binds Mg-ATP. The chain is Light-independent protochlorophyllide reductase iron-sulfur ATP-binding protein from Rhodobacter capsulatus (strain ATCC BAA-309 / NBRC 16581 / SB1003).